The sequence spans 125 residues: Secreted RxLR effector protein 22 (125 aa).

The first 26 residues, 1-26 (MRLIYSALVTAAAMVAISNGSTPARG), serve as a signal peptide directing secretion. A disordered region spans residues 21–66 (STPARGNEVETRSLRGGNEVDSSMSDDGERAARGGGRVRSQASGVT). The RxLR-dEER motif lies at 32–50 (RSLRGGNEVDSSMSDDGER).

Belongs to the RxLR effector family.

It is found in the secreted. It localises to the host nucleus. Functionally, effector that acts as a broad suppressor of cell death to interrupt plant immunity. Inhibits cell death induced by cell death-inducing proteins, including the PAMP elicitor INF1 from P.infestans. The sequence is that of Secreted RxLR effector protein 22 from Plasmopara viticola (Downy mildew of grapevine).